The primary structure comprises 694 residues: Elongation factor G (694 aa).

The 275-residue stretch at 8-282 folds into the tr-type G domain; that stretch reads KDYRNIGIMA…AVIDYLPSPV (275 aa). GTP-binding positions include 17-24, 81-85, and 135-138; these read AHIDAGKT, DTPGH, and NKMD.

This sequence belongs to the TRAFAC class translation factor GTPase superfamily. Classic translation factor GTPase family. EF-G/EF-2 subfamily.

It localises to the cytoplasm. Its function is as follows. Catalyzes the GTP-dependent ribosomal translocation step during translation elongation. During this step, the ribosome changes from the pre-translocational (PRE) to the post-translocational (POST) state as the newly formed A-site-bound peptidyl-tRNA and P-site-bound deacylated tRNA move to the P and E sites, respectively. Catalyzes the coordinated movement of the two tRNA molecules, the mRNA and conformational changes in the ribosome. This is Elongation factor G from Mesomycoplasma hyopneumoniae (strain J / ATCC 25934 / NCTC 10110) (Mycoplasma hyopneumoniae).